Reading from the N-terminus, the 162-residue chain is Endoribonuclease YbeY (162 aa).

Zn(2+) is bound by residues histidine 128, histidine 132, and histidine 138.

Belongs to the endoribonuclease YbeY family. It depends on Zn(2+) as a cofactor.

Its subcellular location is the cytoplasm. In terms of biological role, single strand-specific metallo-endoribonuclease involved in late-stage 70S ribosome quality control and in maturation of the 3' terminus of the 16S rRNA. The sequence is that of Endoribonuclease YbeY from Lactococcus lactis subsp. cremoris (strain SK11).